The chain runs to 407 residues: Phosphopentomutase (407 aa).

Mn(2+) is bound by residues Asp10, Asp306, His311, Asp347, His348, and His359.

It belongs to the phosphopentomutase family. It depends on Mn(2+) as a cofactor.

Its subcellular location is the cytoplasm. It catalyses the reaction 2-deoxy-alpha-D-ribose 1-phosphate = 2-deoxy-D-ribose 5-phosphate. The enzyme catalyses alpha-D-ribose 1-phosphate = D-ribose 5-phosphate. It functions in the pathway carbohydrate degradation; 2-deoxy-D-ribose 1-phosphate degradation; D-glyceraldehyde 3-phosphate and acetaldehyde from 2-deoxy-alpha-D-ribose 1-phosphate: step 1/2. In terms of biological role, isomerase that catalyzes the conversion of deoxy-ribose 1-phosphate (dRib-1-P) and ribose 1-phosphate (Rib-1-P) to deoxy-ribose 5-phosphate (dRib-5-P) and ribose 5-phosphate (Rib-5-P), respectively. The chain is Phosphopentomutase from Cronobacter sakazakii (strain ATCC BAA-894) (Enterobacter sakazakii).